Reading from the N-terminus, the 159-residue chain is Anaerobic nitrite reductase HB2 (159 aa).

The Globin domain maps to 2–152; it reads GFTEKQEGLV…LAEAIKAEMK (151 aa). A Homodimerization motif is present at residues 35-39; it reads EIAPG. The heme b site is built by Ser45, Lys59, His63, and His98. The short motif at 105-117 is the Homodimerization element; sequence DPHFEVVKEALLR.

This sequence belongs to the plant globin family. Homodimer. Requires heme b as cofactor.

The protein localises to the cytoplasm. The protein resides in the nucleus. It carries out the reaction Fe(III)-heme b-[protein] + nitric oxide + H2O = Fe(II)-heme b-[protein] + nitrite + 2 H(+). In terms of biological role, phytoglobin that reduces nitrite to nitric oxide (NO) under anoxic conditions (e.g. during flooding or in waterlogged soil). May not function as an oxygen storage or transport protein. Has an unusually high affinity for O(2) through an hexacoordinate heme iron because of a very low dissociation constant. In Gossypium hirsutum (Upland cotton), this protein is Anaerobic nitrite reductase HB2.